Consider the following 385-residue polypeptide: Homoserine O-succinyltransferase (385 aa).

An AB hydrolase-1 domain is found at 46-355 (NAILICHALS…NSQHGHDAFL (310 aa)). Residue Ser-151 is the Nucleophile of the active site. A substrate-binding site is contributed by Arg-221. Active-site residues include Asp-318 and His-351. Asp-352 serves as a coordination point for substrate.

Belongs to the AB hydrolase superfamily. MetX family. In terms of assembly, homodimer.

The protein resides in the cytoplasm. The catalysed reaction is L-homoserine + succinyl-CoA = O-succinyl-L-homoserine + CoA. The protein operates within amino-acid biosynthesis; L-methionine biosynthesis via de novo pathway; O-succinyl-L-homoserine from L-homoserine: step 1/1. In terms of biological role, transfers a succinyl group from succinyl-CoA to L-homoserine, forming succinyl-L-homoserine. In Hydrogenovibrio crunogenus (strain DSM 25203 / XCL-2) (Thiomicrospira crunogena), this protein is Homoserine O-succinyltransferase.